The sequence spans 232 residues: Charged multivesicular body protein 4c (232 aa).

2 disordered regions span residues 1-23 and 177-232; these read MSKL…PSAQ and NKKM…AWAT. The intramolecular interaction with C-terminus stretch occupies residues 1-153; sequence MSKLGKFFKG…EISEAFSQRV (153 aa). Coiled coils occupy residues 21-45 and 125-185; these read SAQE…YLEN and LNKI…SLEL. Positions 154–232 are intramolecular interaction with N-terminus; the sequence is QFADGFDEAE…DFKQLAAWAT (79 aa). Residue serine 210 is modified to Phosphoserine; by AURKB.

Belongs to the SNF7 family. As to quaternary structure, probable core component of the endosomal sorting required for transport complex III (ESCRT-III). ESCRT-III components are thought to multimerize to form a flat lattice on the perimeter membrane of the endosome. Several assembly forms of ESCRT-III may exist that interact and act sequentially. Self-associates. Interacts with CHMP2A. Interacts with CHMP4A. Interacts with CHMP4B. Interacts with CHMP6. Interacts with VPS4A. Interacts with PDCD6IP; the interaction is direct. In terms of processing, phosphorylated at Ser-210 by AURKB during cytokinesis: together with ZFYVE19/ANCHR, phosphorylated CHMP4C retains abscission-competent VPS4 (VPS4A and/or VPS4B) at the midbody ring until abscission checkpoint signaling is terminated at late cytokinesis.

The protein localises to the cytoplasm. It is found in the cytosol. It localises to the late endosome membrane. Its subcellular location is the midbody. The protein resides in the midbody ring. In terms of biological role, probable core component of the endosomal sorting required for transport complex III (ESCRT-III) which is involved in multivesicular bodies (MVBs) formation and sorting of endosomal cargo proteins into MVBs. MVBs contain intraluminal vesicles (ILVs) that are generated by invagination and scission from the limiting membrane of the endosome and mostly are delivered to lysosomes enabling degradation of membrane proteins, such as stimulated growth factor receptors, lysosomal enzymes and lipids. The MVB pathway appears to require the sequential function of ESCRT-O, -I,-II and -III complexes. ESCRT-III proteins mostly dissociate from the invaginating membrane before the ILV is released. The ESCRT machinery also functions in topologically equivalent membrane fission events, such as the terminal stages of cytokinesis. Key component of the cytokinesis checkpoint, a process required to delay abscission to prevent both premature resolution of intercellular chromosome bridges and accumulation of DNA damage: upon phosphorylation by AURKB, together with ZFYVE19/ANCHR, retains abscission-competent VPS4 (VPS4A and/or VPS4B) at the midbody ring until abscission checkpoint signaling is terminated at late cytokinesis. Deactivation of AURKB results in dephosphorylation of CHMP4C followed by its dissociation from ANCHR and VPS4 and subsequent abscission. ESCRT-III proteins are believed to mediate the necessary vesicle extrusion and/or membrane fission activities, possibly in conjunction with the AAA ATPase VPS4. CHMP4A/B/C are required for the exosomal release of SDCBP, CD63 and syndecan. The chain is Charged multivesicular body protein 4c (Chmp4c) from Mus musculus (Mouse).